The following is a 166-amino-acid chain: Large ribosomal subunit protein uL10 (166 aa).

This sequence belongs to the universal ribosomal protein uL10 family. Part of the ribosomal stalk of the 50S ribosomal subunit. The N-terminus interacts with L11 and the large rRNA to form the base of the stalk. The C-terminus forms an elongated spine to which L12 dimers bind in a sequential fashion forming a multimeric L10(L12)X complex.

Its function is as follows. Forms part of the ribosomal stalk, playing a central role in the interaction of the ribosome with GTP-bound translation factors. The protein is Large ribosomal subunit protein uL10 of Staphylococcus aureus (strain JH1).